The primary structure comprises 349 residues: Inositol-tetrakisphosphate 1-kinase 2 (349 aa).

Residues Lys-48 and Lys-90 each contribute to the 1D-myo-inositol 1,3,4-trisphosphate site. 2 residues coordinate ATP: Arg-125 and Lys-175. 1D-myo-inositol 1,3,4-trisphosphate is bound by residues His-186 and Lys-218. Residues 207–218 and Ser-233 each bind ATP; that span reads QEFVNHGGILFK. Mg(2+) is bound by residues Asp-298, Asp-313, and Asn-315. Asn-315 provides a ligand contact to 1D-myo-inositol 1,3,4-trisphosphate.

It belongs to the ITPK1 family. As to quaternary structure, monomer. Mg(2+) serves as cofactor.

The enzyme catalyses 1D-myo-inositol 3,4,5,6-tetrakisphosphate + ATP = 1D-myo-inositol 1,3,4,5,6-pentakisphosphate + ADP + H(+). The catalysed reaction is 1D-myo-inositol 1,3,4-trisphosphate + ATP = 1D-myo-inositol 1,3,4,5-tetrakisphosphate + ADP + H(+). It catalyses the reaction 1D-myo-inositol 1,3,4-trisphosphate + ATP = 1D-myo-inositol 1,3,4,6-tetrakisphosphate + ADP + H(+). Its function is as follows. Kinase that can phosphorylate various inositol polyphosphate such as Ins(3,4,5,6)P4 or Ins(1,3,4)P3 and participates in phytic acid biosynthesis in developing seeds. Phytic acid is the primary storage form of phosphorus in cereal grains and other plant seeds. In Oryza sativa subsp. indica (Rice), this protein is Inositol-tetrakisphosphate 1-kinase 2 (ITPK2).